The chain runs to 955 residues: MMTAHRKSNGDTTNFARRHIGPSARDVAAMLETVGAKSVDALMAETLPASIRQAAPLDLGKPLSETEAIAHMGELAAQNQVFTSLIGQGYSGTILPAVIQRNILENPAWYTAYTPYQPEISQGRLEALFNFQTMICDLTGLDVANASLLDEATAAAEAMALAERHSRVEAKAFFVDKDVHPQTLAVMRTRAEPLGWNLIVGDPLTDLDKADVLGALLQYPGSSGALRDLRPAIAALKAKGALAIVAADLLALTLLASPGELGADIAIGSAQRFGVPMGYGGPHAAYMAVRDALKRSLPGRIVGLSVDSRGMPAYRLALQTREQHIRREKATSNICTAQVLLAVIAAMYAVYHGPEGLSQIARQVHRRAAVLAAGLRKLGFAPHSDSFFDTLSVDAGAKRAEIVARAAAEKINLGVGETALRIALDETTTPATVEAVWRAFGGQLAYAELDATTREALPEALKRTTAFLTHPVFHAHRSETEMLRYMRKLSDRDLALDRAMIPLGSCTMKLNATTEMMPLTWPEFGSLHPFAPREQAKGYHALFARLEKWLCDITGYDAISLQPNSGAQGEYAGLLAIRGYHAARGEAHRKICLIPSSAHGTNPASAAMVGMDVVVVACEKNGDVDVNDLRAKADKHANDLAAIMITYPSTHGVFEEHIREICDIVHGHGGQVYLDGANLNAQVGLSRPGDYGADVSHLNLHKTFCIPHGGGGPGMGPIGVKAHLAPFLPGHPATRGDAPVGPVSAAPFGSASILTISYIYILMMGGEGLKRATEIAILNANYIAARLDAHFPVLYKNARGRVAHECIVDPRALKTTSGVTVDDIAKRLIDYGFHAPTMSFPVPGTLMIEPTESESKAELDRFCDAMIAIRKEIGEVEAGRFKIEASPLRHAPHTVHDIADDAWARAYSRAEGCFPDGVSRTDKYWSPVGRVDNVYGDRNLVCSCPPVSDYAEAAE.

Residue lysine 702 is modified to N6-(pyridoxal phosphate)lysine.

It belongs to the GcvP family. As to quaternary structure, the glycine cleavage system is composed of four proteins: P, T, L and H. Pyridoxal 5'-phosphate is required as a cofactor.

The enzyme catalyses N(6)-[(R)-lipoyl]-L-lysyl-[glycine-cleavage complex H protein] + glycine + H(+) = N(6)-[(R)-S(8)-aminomethyldihydrolipoyl]-L-lysyl-[glycine-cleavage complex H protein] + CO2. The glycine cleavage system catalyzes the degradation of glycine. The P protein binds the alpha-amino group of glycine through its pyridoxal phosphate cofactor; CO(2) is released and the remaining methylamine moiety is then transferred to the lipoamide cofactor of the H protein. This chain is Glycine dehydrogenase (decarboxylating), found in Bradyrhizobium diazoefficiens (strain JCM 10833 / BCRC 13528 / IAM 13628 / NBRC 14792 / USDA 110).